Here is a 154-residue protein sequence, read N- to C-terminus: SsrA-binding protein (154 aa).

The span at 123-142 (AEHDKRHTIKDRDWQREQGR) shows a compositional bias: basic and acidic residues. A disordered region spans residues 123-154 (AEHDKRHTIKDRDWQREQGRLMRHKVSAPHKD). Positions 143 to 154 (LMRHKVSAPHKD) are enriched in basic residues.

It belongs to the SmpB family.

Its subcellular location is the cytoplasm. Functionally, required for rescue of stalled ribosomes mediated by trans-translation. Binds to transfer-messenger RNA (tmRNA), required for stable association of tmRNA with ribosomes. tmRNA and SmpB together mimic tRNA shape, replacing the anticodon stem-loop with SmpB. tmRNA is encoded by the ssrA gene; the 2 termini fold to resemble tRNA(Ala) and it encodes a 'tag peptide', a short internal open reading frame. During trans-translation Ala-aminoacylated tmRNA acts like a tRNA, entering the A-site of stalled ribosomes, displacing the stalled mRNA. The ribosome then switches to translate the ORF on the tmRNA; the nascent peptide is terminated with the 'tag peptide' encoded by the tmRNA and targeted for degradation. The ribosome is freed to recommence translation, which seems to be the essential function of trans-translation. The chain is SsrA-binding protein from Leptothrix cholodnii (strain ATCC 51168 / LMG 8142 / SP-6) (Leptothrix discophora (strain SP-6)).